A 159-amino-acid chain; its full sequence is Cyclic pyranopterin monophosphate synthase (159 aa).

Residues 75–77 (LCH) and 113–114 (ME) contribute to the substrate site. Asp128 is a catalytic residue.

This sequence belongs to the MoaC family. Homohexamer; trimer of dimers.

The catalysed reaction is (8S)-3',8-cyclo-7,8-dihydroguanosine 5'-triphosphate = cyclic pyranopterin phosphate + diphosphate. It participates in cofactor biosynthesis; molybdopterin biosynthesis. Functionally, catalyzes the conversion of (8S)-3',8-cyclo-7,8-dihydroguanosine 5'-triphosphate to cyclic pyranopterin monophosphate (cPMP). The sequence is that of Cyclic pyranopterin monophosphate synthase from Heliobacterium modesticaldum (strain ATCC 51547 / Ice1).